The chain runs to 197 residues: Holliday junction branch migration complex subunit RuvA (197 aa).

Residues 1–64 (MYEYIKGKYI…EDFIGVYGFL (64 aa)) form a domain I region. The segment at 65–143 (TKDELSMFKL…IDILEEDDEQ (79 aa)) is domain II. The segment at 144–148 (TINKV) is flexible linker. The domain III stretch occupies residues 149-197 (TDDKKVLEAVAALITLGYSEKEANKVINSCDKNNSLEQIIKEALKYLMK).

It belongs to the RuvA family. Homotetramer. Forms an RuvA(8)-RuvB(12)-Holliday junction (HJ) complex. HJ DNA is sandwiched between 2 RuvA tetramers; dsDNA enters through RuvA and exits via RuvB. An RuvB hexamer assembles on each DNA strand where it exits the tetramer. Each RuvB hexamer is contacted by two RuvA subunits (via domain III) on 2 adjacent RuvB subunits; this complex drives branch migration. In the full resolvosome a probable DNA-RuvA(4)-RuvB(12)-RuvC(2) complex forms which resolves the HJ.

The protein localises to the cytoplasm. Its function is as follows. The RuvA-RuvB-RuvC complex processes Holliday junction (HJ) DNA during genetic recombination and DNA repair, while the RuvA-RuvB complex plays an important role in the rescue of blocked DNA replication forks via replication fork reversal (RFR). RuvA specifically binds to HJ cruciform DNA, conferring on it an open structure. The RuvB hexamer acts as an ATP-dependent pump, pulling dsDNA into and through the RuvAB complex. HJ branch migration allows RuvC to scan DNA until it finds its consensus sequence, where it cleaves and resolves the cruciform DNA. The polypeptide is Holliday junction branch migration complex subunit RuvA (Clostridium botulinum (strain 657 / Type Ba4)).